We begin with the raw amino-acid sequence, 339 residues long: Aspartate carbamoyltransferase catalytic subunit (339 aa).

The carbamoyl phosphate site is built by R59 and T60. L-aspartate is bound at residue K87. The carbamoyl phosphate site is built by R109, H142, and Q145. L-aspartate contacts are provided by R182 and R253. G294 and P295 together coordinate carbamoyl phosphate.

The protein belongs to the aspartate/ornithine carbamoyltransferase superfamily. ATCase family. In terms of assembly, heterododecamer (2C3:3R2) of six catalytic PyrB chains organized as two trimers (C3), and six regulatory PyrI chains organized as three dimers (R2).

The catalysed reaction is carbamoyl phosphate + L-aspartate = N-carbamoyl-L-aspartate + phosphate + H(+). Its pathway is pyrimidine metabolism; UMP biosynthesis via de novo pathway; (S)-dihydroorotate from bicarbonate: step 2/3. Its function is as follows. Catalyzes the condensation of carbamoyl phosphate and aspartate to form carbamoyl aspartate and inorganic phosphate, the committed step in the de novo pyrimidine nucleotide biosynthesis pathway. This Prochlorococcus marinus (strain NATL2A) protein is Aspartate carbamoyltransferase catalytic subunit.